A 65-amino-acid chain; its full sequence is Alpha-insect toxin BotIT1 (65 aa).

Positions 2–64 (RDAYIAQNYN…VPIRIPGKCH (63 aa)) constitute an LCN-type CS-alpha/beta domain. 4 disulfides stabilise this stretch: Cys12-Cys63, Cys16-Cys36, Cys22-Cys46, and Cys26-Cys48.

The protein belongs to the long (4 C-C) scorpion toxin superfamily. Sodium channel inhibitor family. Alpha subfamily. In terms of tissue distribution, expressed by the venom gland.

It is found in the secreted. In terms of biological role, alpha toxins bind voltage-independently at site-3 of sodium channels (Nav) and inhibit the inactivation of the activated channels, thereby blocking neuronal transmission. This contractive toxin is highly toxic to insects and barely toxic to mammals. The polypeptide is Alpha-insect toxin BotIT1 (Buthus occitanus tunetanus (Common European scorpion)).